Here is a 716-residue protein sequence, read N- to C-terminus: Zinc finger CCCH domain-containing protein 30 (716 aa).

2 ANK repeats span residues 90–120 and 125–157; these read DYRT…DVNR and DQTT…DLNL. Residues 201–231 are disordered; sequence VTNVPNRSSSPCHSPTGENGGSGSGSPLGSP. Residues 203 to 213 show a composition bias toward polar residues; sequence NVPNRSSSPCH. 2 consecutive C3H1-type zinc fingers follow at residues 306–328 and 336–360; these read PCPD…HGVF and QYRT…HTPE. The tract at residues 521 to 562 is disordered; it reads FQQQQQQQQSMLSPINTSFSSPKSVDHSLFSGGGRMSPRNVV. Positions 530–543 are enriched in polar residues; it reads SMLSPINTSFSSPK. At serine 566 the chain carries Phosphoserine. The segment covering 583 to 594 has biased composition (low complexity); the sequence is QQQQQQQQQQHQ. Disordered regions lie at residues 583-638 and 667-692; these read QQQQ…MSSE and PAEA…PVEP. Positions 605–630 are enriched in polar residues; sequence TNSSPIVGSPVNNNTWSSKWGSSNGQ.

The polypeptide is Zinc finger CCCH domain-containing protein 30 (Arabidopsis thaliana (Mouse-ear cress)).